A 313-amino-acid chain; its full sequence is Homoserine O-succinyltransferase (313 aa).

Catalysis depends on Cys142, which acts as the Acyl-thioester intermediate. Substrate contacts are provided by Lys163 and Ser192. His235 (proton acceptor) is an active-site residue. Glu237 is an active-site residue. Residue Arg249 participates in substrate binding.

The protein belongs to the MetA family.

The protein localises to the cytoplasm. The enzyme catalyses L-homoserine + succinyl-CoA = O-succinyl-L-homoserine + CoA. It participates in amino-acid biosynthesis; L-methionine biosynthesis via de novo pathway; O-succinyl-L-homoserine from L-homoserine: step 1/1. Transfers a succinyl group from succinyl-CoA to L-homoserine, forming succinyl-L-homoserine. This chain is Homoserine O-succinyltransferase, found in Vibrio vulnificus (strain CMCP6).